Consider the following 114-residue polypeptide: MIEVALGAGLGASVRYLITQVLKSKTRVFPWATFIINITGALLLGFLHSKITSSHILLLLGTGFLGGYTTFSTFQVELVTLVNNRKQKMMIIYLLLTVICGILAAYCGSWLGKL.

Transmembrane regions (helical) follow at residues 28–48, 56–76, and 91–111; these read VFPW…GFLH, ILLL…TFQV, and IIYL…GSWL. The Na(+) site is built by G66 and T69.

Belongs to the fluoride channel Fluc/FEX (TC 1.A.43) family.

It is found in the cell membrane. The enzyme catalyses fluoride(in) = fluoride(out). Its activity is regulated as follows. Na(+) is not transported, but it plays an essential structural role and its presence is essential for fluoride channel function. Functionally, fluoride-specific ion channel. Important for reducing fluoride concentration in the cell, thus reducing its toxicity. The chain is Fluoride-specific ion channel FluC 1 from Ligilactobacillus salivarius (strain UCC118) (Lactobacillus salivarius).